Reading from the N-terminus, the 2153-residue chain is Genome polyprotein (2153 aa).

A lipid anchor (N-myristoyl glycine; by host) is attached at Gly-2. Topologically, residues 2 to 1466 (GAQVSRQNVG…DLNIANSIIT (1465 aa)) are cytoplasmic. The amphipathic alpha-helix stretch occupies residues 565–582 (PITQNPVERYVDEVLNEV). Catalysis depends on for protease 2A activity residues His-871 and Asp-888. Residues Cys-905 and Cys-907 each coordinate Zn(2+). The active-site For protease 2A activity is the Cys-959. 2 residues coordinate Zn(2+): Cys-965 and His-967. Residues 1091–1160 (SDSWLKKFTE…NLRAADTNTQ (70 aa)) form a membrane-binding region. The interval 1091 to 1224 (SDSWLKKFTE…PPGTGKSITT (134 aa)) is oligomerization. An RNA-binding region spans residues 1112–1116 (GNKIS). Residues 1186–1346 (KRIKVLYHKC…YKDNQGKLDV (161 aa)) form the SF3 helicase domain. Zn(2+) is bound by residues Cys-1353, Cys-1364, and Cys-1369. Residues 1353-1369 (CDVDSKIGNAKCCPFVC) form a C4-type; degenerate zinc finger. An RNA-binding region spans residues 1396–1403 (EDKRRRQV). The tract at residues 1407–1412 (MSAIFQ) is oligomerization. Residues 1467-1482 (IIANIISIAGIIYIIY) lie within the membrane without spanning it. The Cytoplasmic segment spans residues 1483–2153 (KLFCSLQGPY…LLRHEWYEKF (671 aa)). An O-(5'-phospho-RNA)-tyrosine modification is found at Tyr-1492. The Peptidase C3 domain occupies 1511–1689 (GPEEEFGMSI…FSSMLLRSYF (179 aa)). Residues His-1550, Glu-1581, and Cys-1657 each act as for protease 3C activity in the active site. One can recognise a RdRp catalytic domain in the interval 1921–2034 (DCIMAFDYTN…SYKYKLDMEA (114 aa)). Asp-1927 and Asp-2020 together coordinate Mg(2+).

The protein belongs to the picornaviruses polyprotein family. As to quaternary structure, interacts with capsid protein VP1 and capsid protein VP3 to form heterotrimeric protomers. Interacts with capsid protein VP0, and capsid protein VP3 to form heterotrimeric protomers. Five protomers subsequently associate to form pentamers which serve as building blocks for the capsid. Interacts with capsid protein VP2, capsid protein VP3 and capsid protein VP4 following cleavage of capsid protein VP0. In terms of assembly, interacts with capsid protein VP1 and capsid protein VP3 in the mature capsid. As to quaternary structure, interacts with capsid protein VP0 and capsid protein VP1 to form heterotrimeric protomers. Five protomers subsequently associate to form pentamers which serve as building blocks for the capsid. Interacts with capsid protein VP4 in the mature capsid. Interacts with protein 2C; this interaction may be important for virion morphogenesis. Interacts with capsid protein VP1 and capsid protein VP3. In terms of assembly, homodimer. As to quaternary structure, homohexamer; forms a hexameric ring structure with 6-fold symmetry characteristic of AAA+ ATPases. Interacts (via N-terminus) with host RTN3 (via reticulon domain); this interaction is important for viral replication. Interacts with capsid protein VP3; this interaction may be important for virion morphogenesis. Interacts with protein 3CD. In terms of assembly, homodimer. Interacts with host GBF1. Interacts (via GOLD domain) with host ACBD3 (via GOLD domain); this interaction allows the formation of a viral protein 3A/ACBD3 heterotetramer with a 2:2 stoichiometry, which will stimulate the recruitment of host PI4KB in order to synthesize PI4P at the viral RNA replication sites. As to quaternary structure, interacts with RNA-directed RNA polymerase. Interacts with protein 3AB and with RNA-directed RNA polymerase. In terms of assembly, interacts with Viral protein genome-linked and with protein 3CD. Mg(2+) serves as cofactor. Post-translationally, specific enzymatic cleavages in vivo by the viral proteases yield processing intermediates and the mature proteins. In terms of processing, myristoylation is required for the formation of pentamers during virus assembly. Further assembly of 12 pentamers and a molecule of genomic RNA generates the provirion. During virion maturation, immature virions are rendered infectious following cleavage of VP0 into VP4 and VP2. This maturation seems to be an autocatalytic event triggered by the presence of RNA in the capsid and it is followed by a conformational change infectious virion. Post-translationally, myristoylation is required during RNA encapsidation and formation of the mature virus particle. In terms of processing, VPg is uridylylated by the polymerase into VPg-pUpU. This acts as a nucleotide-peptide primer for the genomic RNA replication.

The protein resides in the virion. Its subcellular location is the host cytoplasm. It localises to the host cytoplasmic vesicle membrane. It is found in the host nucleus. It carries out the reaction a ribonucleoside 5'-triphosphate + H2O = a ribonucleoside 5'-diphosphate + phosphate + H(+). The catalysed reaction is Selective cleavage of Tyr-|-Gly bond in the picornavirus polyprotein.. It catalyses the reaction RNA(n) + a ribonucleoside 5'-triphosphate = RNA(n+1) + diphosphate. The enzyme catalyses Selective cleavage of Gln-|-Gly bond in the poliovirus polyprotein. In other picornavirus reactions Glu may be substituted for Gln, and Ser or Thr for Gly.. With respect to regulation, replication or transcription is subject to high level of random mutations by the nucleotide analog ribavirin. In terms of biological role, forms an icosahedral capsid of pseudo T=3 symmetry with capsid proteins VP2 and VP3. The capsid is 300 Angstroms in diameter, composed of 60 copies of each capsid protein and enclosing the viral positive strand RNA genome. Capsid protein VP1 mainly forms the vertices of the capsid. Capsid protein VP1 interacts with host cell receptor to provide virion attachment to target host cells. This attachment induces virion internalization. Tyrosine kinases are probably involved in the entry process. After binding to its receptor, the capsid undergoes conformational changes. Capsid protein VP1 N-terminus (that contains an amphipathic alpha-helix) and capsid protein VP4 are externalized. Together, they shape a pore in the host membrane through which viral genome is translocated to host cell cytoplasm. Its function is as follows. Forms an icosahedral capsid of pseudo T=3 symmetry with capsid proteins VP2 and VP3. The capsid is 300 Angstroms in diameter, composed of 60 copies of each capsid protein and enclosing the viral positive strand RNA genome. Functionally, lies on the inner surface of the capsid shell. After binding to the host receptor, the capsid undergoes conformational changes. Capsid protein VP4 is released, Capsid protein VP1 N-terminus is externalized, and together, they shape a pore in the host membrane through which the viral genome is translocated into the host cell cytoplasm. Component of immature procapsids, which is cleaved into capsid proteins VP4 and VP2 after maturation. Allows the capsid to remain inactive before the maturation step. In terms of biological role, cysteine protease that cleaves viral polyprotein and specific host proteins. It is responsible for the autocatalytic cleavage between the P1 and P2 regions, which is the first cleavage occurring in the polyprotein. Also cleaves the host translation initiation factor EIF4G1, in order to shut down the capped cellular mRNA translation. Inhibits the host nucleus-cytoplasm protein and RNA trafficking by cleaving host members of the nuclear pores. Counteracts stress granule formation probably by antagonizing its assembly or promoting its dissassembly. Its function is as follows. Plays an essential role in the virus replication cycle by acting as a viroporin. Creates a pore in the host endoplasmic reticulum and as a consequence releases Ca2+ in the cytoplasm of infected cell. In turn, high levels of cytoplasmic calcium may trigger membrane trafficking and transport of viral ER-associated proteins to viroplasms, sites of viral genome replication. Functionally, induces and associates with structural rearrangements of intracellular membranes. Displays RNA-binding, nucleotide binding and NTPase activities. May play a role in virion morphogenesis and viral RNA encapsidation by interacting with the capsid protein VP3. Localizes the viral replication complex to the surface of membranous vesicles. It inhibits host cell endoplasmic reticulum-to-Golgi apparatus transport and causes the disassembly of the Golgi complex, possibly through GBF1 interaction. This would result in depletion of MHC, trail receptors and IFN receptors at the host cell surface. Plays an essential role in viral RNA replication by recruiting ACBD3 and PI4KB at the viral replication sites, thereby allowing the formation of the rearranged membranous structures where viral replication takes place. In terms of biological role, acts as a primer for viral RNA replication and remains covalently bound to viral genomic RNA. VPg is uridylylated prior to priming replication into VPg-pUpU. The oriI viral genomic sequence may act as a template for this. The VPg-pUpU is then used as primer on the genomic RNA poly(A) by the RNA-dependent RNA polymerase to replicate the viral genome. During genome replication, the VPg-RNA linkage is removed by the host TDP2, thereby accelerating replication. During the late stage of the replication cycle, host TDP2 is excluded from sites of viral RNA synthesis and encapsidation, allowing for the generation of progeny virions. Its function is as follows. Involved in the viral replication complex and viral polypeptide maturation. It exhibits protease activity with a specificity and catalytic efficiency that is different from protease 3C. Protein 3CD lacks polymerase activity. Protein 3CD binds to the 5'UTR of the viral genome. Functionally, major viral protease that mediates proteolytic processing of the polyprotein. Cleaves host EIF5B, contributing to host translation shutoff. Also cleaves host PABPC1, contributing to host translation shutoff. Cleaves host NLRP1, triggers host N-glycine-mediated degradation of the autoinhibitory NLRP1 N-terminal fragment. Replicates the viral genomic RNA on the surface of intracellular membranes. May form linear arrays of subunits that propagate along a strong head-to-tail interaction called interface-I. Covalently attaches UMP to a tyrosine of VPg, which is used to prime RNA synthesis. The positive stranded RNA genome is first replicated at virus induced membranous vesicles, creating a dsRNA genomic replication form. This dsRNA is then used as template to synthesize positive stranded RNA genomes. ss(+)RNA genomes are either translated, replicated or encapsidated. This Human rhinovirus 16 (HRV-16) protein is Genome polyprotein.